Here is a 273-residue protein sequence, read N- to C-terminus: Polyamine aminopropyltransferase (273 aa).

Residues 5–238 (ENWFSERYSD…GFWSFTIASE (234 aa)) form the PABS domain. Position 34 (Gln-34) interacts with S-methyl-5'-thioadenosine. 2 residues coordinate spermidine: His-65 and Asp-90. S-methyl-5'-thioadenosine contacts are provided by residues Glu-109 and 140–141 (DG). Asp-158 (proton acceptor) is an active-site residue. 158–161 (DSTD) contacts spermidine. Position 165 (Pro-165) interacts with S-methyl-5'-thioadenosine.

It belongs to the spermidine/spermine synthase family. Homodimer or homotetramer.

The protein localises to the cytoplasm. It carries out the reaction S-adenosyl 3-(methylsulfanyl)propylamine + putrescine = S-methyl-5'-thioadenosine + spermidine + H(+). It functions in the pathway amine and polyamine biosynthesis; spermidine biosynthesis; spermidine from putrescine: step 1/1. In terms of biological role, catalyzes the irreversible transfer of a propylamine group from the amino donor S-adenosylmethioninamine (decarboxy-AdoMet) to putrescine (1,4-diaminobutane) to yield spermidine. This chain is Polyamine aminopropyltransferase, found in Thermoplasma volcanium (strain ATCC 51530 / DSM 4299 / JCM 9571 / NBRC 15438 / GSS1).